The chain runs to 552 residues: Putative transport protein ECA4401 (552 aa).

A run of 5 helical transmembrane segments spans residues 4-24, 26-46, 65-85, 90-112, and 158-178; these read IALT…IGNW, IYGV…VGHV, FGLI…FFSS, GLRL…VMLH, and TGYA…MWLM. RCK C-terminal domains follow at residues 191–276 and 279–361; these read KQFE…VIGN and ETSL…IVGN. The next 6 membrane-spanning stretches (helical) occupy residues 371 to 391, 393 to 413, 439 to 459, 464 to 484, 493 to 513, and 530 to 550; these read MLPV…PLMV, GFPV…ALVL, IVLF…DTLL, VWWI…VGIL, YLTL…LAFA, and VYPL…VLFL.

Belongs to the AAE transporter (TC 2.A.81) family. YidE subfamily.

It is found in the cell membrane. This is Putative transport protein ECA4401 from Pectobacterium atrosepticum (strain SCRI 1043 / ATCC BAA-672) (Erwinia carotovora subsp. atroseptica).